A 354-amino-acid polypeptide reads, in one-letter code: Uroporphyrinogen decarboxylase (354 aa).

Substrate contacts are provided by residues 27-31, aspartate 77, tyrosine 154, threonine 209, and histidine 327; that span reads RQAGR.

Belongs to the uroporphyrinogen decarboxylase family. As to quaternary structure, homodimer.

It is found in the cytoplasm. It carries out the reaction uroporphyrinogen III + 4 H(+) = coproporphyrinogen III + 4 CO2. It functions in the pathway porphyrin-containing compound metabolism; protoporphyrin-IX biosynthesis; coproporphyrinogen-III from 5-aminolevulinate: step 4/4. Its function is as follows. Catalyzes the decarboxylation of four acetate groups of uroporphyrinogen-III to yield coproporphyrinogen-III. This Salmonella arizonae (strain ATCC BAA-731 / CDC346-86 / RSK2980) protein is Uroporphyrinogen decarboxylase.